The primary structure comprises 467 residues: 2-succinylbenzoate--CoA ligase (467 aa).

This sequence belongs to the ATP-dependent AMP-binding enzyme family. MenE subfamily.

It carries out the reaction 2-succinylbenzoate + ATP + CoA = 2-succinylbenzoyl-CoA + AMP + diphosphate. The protein operates within quinol/quinone metabolism; 1,4-dihydroxy-2-naphthoate biosynthesis; 1,4-dihydroxy-2-naphthoate from chorismate: step 5/7. It participates in quinol/quinone metabolism; menaquinone biosynthesis. Functionally, converts 2-succinylbenzoate (OSB) to 2-succinylbenzoyl-CoA (OSB-CoA). This chain is 2-succinylbenzoate--CoA ligase, found in Listeria innocua serovar 6a (strain ATCC BAA-680 / CLIP 11262).